The sequence spans 475 residues: Methyltransferase-like protein 25B (475 aa).

Residues 185–210 adopt a coiled-coil conformation; that stretch reads NKRLVARAQRLDQELLQALDKMEKRH. Residues 406-426 form a helical membrane-spanning segment; sequence VVAFFSLALLLAPLVETLILL.

This sequence belongs to the METTL25 family.

The protein localises to the membrane. This chain is Methyltransferase-like protein 25B, found in Rattus norvegicus (Rat).